A 104-amino-acid chain; its full sequence is MWILEKKNIFFKIIHIKSSRKFDFSNAIRIVLLPFSSNCCRNSYTVNNGTFTGRQIYTSICKSRIPPCLKGKNGKTTKSESEPMSQKHLKYVKKYINKVRILKK.

This is an uncharacterized protein from Schizosaccharomyces pombe (strain 972 / ATCC 24843) (Fission yeast).